We begin with the raw amino-acid sequence, 166 residues long: Regulatory protein RecX (166 aa).

Belongs to the RecX family.

The protein localises to the cytoplasm. In terms of biological role, modulates RecA activity. The polypeptide is Regulatory protein RecX (Salmonella paratyphi A (strain ATCC 9150 / SARB42)).